A 278-amino-acid chain; its full sequence is Checkpoint protein HUS1B (278 aa).

This sequence belongs to the HUS1 family. Interacts with RAD1 and RAD9B. Expressed strongly in testis, less in spleen, thymus, prostate, colon and leukocytes.

The polypeptide is Checkpoint protein HUS1B (HUS1B) (Homo sapiens (Human)).